The chain runs to 699 residues: Probable xyloglucan glycosyltransferase 12 (699 aa).

2 consecutive transmembrane segments (helical) span residues 126–146 and 194–214; these read CLKV…AAYF and IVLF…CFWI. Residue aspartate 280 is part of the active site. 2 residues coordinate substrate: aspartate 339 and aspartate 341. Aspartate 433 is a catalytic residue. The next 2 membrane-spanning stretches (helical) occupy residues 511 to 531 and 536 to 556; these read LILP…TMFV and LPAW…ILPA. Positions 616–646 are disordered; that stretch reads EKTTKHQRGVSAPETEAEKKAEKTKRKKKKH. Residues lysine 617 and lysine 620 each participate in a glycyl lysine isopeptide (Lys-Gly) (interchain with G-Cter in ubiquitin) cross-link. Serine 626 is modified (phosphoserine). A compositionally biased stretch (basic residues) spans 637–646; the sequence is EKTKRKKKKH. A run of 2 helical transmembrane segments spans residues 649–668 and 674–694; these read IYMK…TRSL and IHFY…LDLI.

It belongs to the glycosyltransferase 2 family. Plant cellulose synthase-like C subfamily. Homodimer. Mainly expressed in roots, flowers and seeds, and, at very low levels, in seedlings, leaves and stems.

The protein resides in the golgi apparatus membrane. Its function is as follows. Probable beta-1,4-glucan synthase rather involved in the synthesis of the xyloglucan backbone than cellulose. Seems to work simultaneously with xyloglucan 6-xylosyltransferase. Xyloglucan is a noncellulosic polysaccharides of plant cell wall and consists of a glucan backbone substituted by xylose, galactose and fucose. The protein is Probable xyloglucan glycosyltransferase 12 of Arabidopsis thaliana (Mouse-ear cress).